A 432-amino-acid polypeptide reads, in one-letter code: D-amino acid dehydrogenase 1 (432 aa).

FAD is bound at residue 3–17; sequence VLVLGSGVIGTASAY. The segment at 410 to 432 is disordered; it reads GLDISRYSNSPENAKNAHPAPAH.

Belongs to the DadA oxidoreductase family. Requires FAD as cofactor.

The catalysed reaction is a D-alpha-amino acid + A + H2O = a 2-oxocarboxylate + AH2 + NH4(+). It functions in the pathway amino-acid degradation; D-alanine degradation; NH(3) and pyruvate from D-alanine: step 1/1. Catalyzes the oxidative deamination of D-amino acids. Has very broad substrate specificity; all the D-amino acids tested can be used as the substrate except D-Glu and D-Gln. Participates in the utilization of several D-amino acids as the sole source of nitrogen, i.e. D-alanine, D-histidine, D-phenylalanine, D-serine, D-threonine, and D-valine. The protein is D-amino acid dehydrogenase 1 (dadA1) of Pseudomonas aeruginosa (strain ATCC 15692 / DSM 22644 / CIP 104116 / JCM 14847 / LMG 12228 / 1C / PRS 101 / PAO1).